A 636-amino-acid chain; its full sequence is Threonine--tRNA ligase (636 aa).

The TGS domain maps to 1–61 (MPVITLPDGS…TQDASLQLIT (61 aa)). A catalytic region spans residues 243 to 534 (DHRKIGKTLD…LIEEFTGKFP (292 aa)). Zn(2+)-binding residues include Cys334, His385, and His511.

It belongs to the class-II aminoacyl-tRNA synthetase family. Homodimer. The cofactor is Zn(2+).

Its subcellular location is the cytoplasm. The catalysed reaction is tRNA(Thr) + L-threonine + ATP = L-threonyl-tRNA(Thr) + AMP + diphosphate + H(+). Its function is as follows. Catalyzes the attachment of threonine to tRNA(Thr) in a two-step reaction: L-threonine is first activated by ATP to form Thr-AMP and then transferred to the acceptor end of tRNA(Thr). Also edits incorrectly charged L-seryl-tRNA(Thr). The sequence is that of Threonine--tRNA ligase from Colwellia psychrerythraea (strain 34H / ATCC BAA-681) (Vibrio psychroerythus).